A 1248-amino-acid polypeptide reads, in one-letter code: ABC transporter B family member 7 (1248 aa).

A run of 6 helical transmembrane segments spans residues 32 to 52 (IVLM…QPFM), 82 to 102 (FLYL…CWMV), 158 to 175 (FTQL…AFIV), 179 to 201 (LTLA…TYIM), 261 to 281 (GLGI…AIWY), and 299 to 321 (VITS…NSFA). Residues 35–322 (MVIGTLSAMA…TLPSLNSFAA (288 aa)) enclose the ABC transmembrane type-1 1 domain. An ABC transporter 1 domain is found at 357–593 (IELRDVYFRY…PEGTYSQLVR (237 aa)). 392 to 399 (GQSGSGKS) contributes to the ATP binding site. Residues Asn473 and Asn652 are each glycosylated (N-linked (GlcNAc...) asparagine). The chain crosses the membrane as a helical span at residues 682-702 (VLLLGSLAAVIHGIVFPVQGL). The ABC transmembrane type-1 2 domain maps to 683–970 (LLLGSLAAVI…TSTMAPDINK (288 aa)). Residue Asn720 is glycosylated (N-linked (GlcNAc...) asparagine). Residues 722 to 742 (SLFWALIFVALGLTDLIVIPL) traverse the membrane as a helical segment. A glycan (N-linked (GlcNAc...) asparagine) is linked at Asn779. 4 helical membrane passes run 813 to 833 (IIGA…MALL), 834 to 854 (VAPV…GFGA), 914 to 934 (GSYL…SWLI), and 939 to 959 (ATFG…VGVT). Residues 1005–1242 (IELQHVSFRY…SGGAYASLVA (238 aa)) enclose the ABC transporter 2 domain. Residue 1040 to 1047 (GESGSGKS) participates in ATP binding. Asn1094, Asn1193, and Asn1244 each carry an N-linked (GlcNAc...) asparagine glycan.

The protein belongs to the ABC transporter superfamily. ABCB family. Multidrug resistance exporter (TC 3.A.1.201) subfamily.

The protein resides in the membrane. This Arabidopsis thaliana (Mouse-ear cress) protein is ABC transporter B family member 7 (ABCB7).